Here is a 144-residue protein sequence, read N- to C-terminus: D-aminoacyl-tRNA deacylase (144 aa).

The short motif at 136-137 (GP) is the Gly-cisPro motif, important for rejection of L-amino acids element.

Belongs to the DTD family. In terms of assembly, homodimer.

It localises to the cytoplasm. It carries out the reaction glycyl-tRNA(Ala) + H2O = tRNA(Ala) + glycine + H(+). It catalyses the reaction a D-aminoacyl-tRNA + H2O = a tRNA + a D-alpha-amino acid + H(+). In terms of biological role, an aminoacyl-tRNA editing enzyme that deacylates mischarged D-aminoacyl-tRNAs. Also deacylates mischarged glycyl-tRNA(Ala), protecting cells against glycine mischarging by AlaRS. Acts via tRNA-based rather than protein-based catalysis; rejects L-amino acids rather than detecting D-amino acids in the active site. By recycling D-aminoacyl-tRNA to D-amino acids and free tRNA molecules, this enzyme counteracts the toxicity associated with the formation of D-aminoacyl-tRNA entities in vivo and helps enforce protein L-homochirality. The chain is D-aminoacyl-tRNA deacylase from Vibrio vulnificus (strain CMCP6).